The following is a 363-amino-acid chain: Cobalt-precorrin-5B C(1)-methyltransferase (363 aa).

It belongs to the CbiD family.

It catalyses the reaction Co-precorrin-5B + S-adenosyl-L-methionine = Co-precorrin-6A + S-adenosyl-L-homocysteine. It participates in cofactor biosynthesis; adenosylcobalamin biosynthesis; cob(II)yrinate a,c-diamide from sirohydrochlorin (anaerobic route): step 6/10. In terms of biological role, catalyzes the methylation of C-1 in cobalt-precorrin-5B to form cobalt-precorrin-6A. This is Cobalt-precorrin-5B C(1)-methyltransferase from Burkholderia mallei (strain ATCC 23344).